The following is a 127-amino-acid chain: Large ribosomal subunit protein eL32 (127 aa).

Over residues 38 to 48 (WRRPKGIDSKM) the composition is skewed to basic and acidic residues. Residues 38–66 (WRRPKGIDSKMRLKKKGKPRSPSIGWSSP) form a disordered region.

The protein belongs to the eukaryotic ribosomal protein eL32 family.

This is Large ribosomal subunit protein eL32 from Thermococcus gammatolerans (strain DSM 15229 / JCM 11827 / EJ3).